Reading from the N-terminus, the 359-residue chain is Homoserine O-acetyltransferase (359 aa).

The AB hydrolase-1 domain occupies 49 to 332; that stretch reads VLICHALTGS…QSSYGHDAFL (284 aa). Ser143 acts as the Nucleophile in catalysis. Arg212 serves as a coordination point for substrate. Active-site residues include Asp299 and His328. A substrate-binding site is contributed by Asp329.

It belongs to the AB hydrolase superfamily. MetX family. Homodimer.

Its subcellular location is the cytoplasm. The catalysed reaction is L-homoserine + acetyl-CoA = O-acetyl-L-homoserine + CoA. Its pathway is amino-acid biosynthesis; L-methionine biosynthesis via de novo pathway; O-acetyl-L-homoserine from L-homoserine: step 1/1. Functionally, transfers an acetyl group from acetyl-CoA to L-homoserine, forming acetyl-L-homoserine. This chain is Homoserine O-acetyltransferase, found in Trichormus variabilis (strain ATCC 29413 / PCC 7937) (Anabaena variabilis).